Consider the following 341-residue polypeptide: Phenylalanine--tRNA ligase alpha subunit (341 aa).

Residue E259 participates in Mg(2+) binding.

It belongs to the class-II aminoacyl-tRNA synthetase family. Phe-tRNA synthetase alpha subunit type 1 subfamily. Tetramer of two alpha and two beta subunits. Mg(2+) serves as cofactor.

It localises to the cytoplasm. It carries out the reaction tRNA(Phe) + L-phenylalanine + ATP = L-phenylalanyl-tRNA(Phe) + AMP + diphosphate + H(+). This is Phenylalanine--tRNA ligase alpha subunit from Mycobacterium bovis (strain ATCC BAA-935 / AF2122/97).